The following is an 84-amino-acid chain: CLAVATA3/ESR (CLE)-related protein 13 (84 aa).

Residues 1-29 (MGRYTTDQVQVYVLVIVLCTFFSTLQARS) form the signal peptide. The interval 57 to 84 (KQVRDISGDRLSPAGPDPQHNGRSPPRK) is disordered. 2 positions are modified to hydroxyproline: Pro-69 and Pro-72. Pro-72 carries O-linked (Ara...) hydroxyproline glycosylation.

The protein belongs to the CLV3/ESR signal peptide family. Post-translationally, the O-glycosylation (arabinosylation) of the hydroxyproline Pro-72 enhances binding affinity of the CLE13p peptide for its receptor. Expressed in young nodules throughout the central tissue. Expressed in the apical region of elongated nodules, corresponding to the meristematic and early infection zones.

Its subcellular location is the secreted. It is found in the extracellular space. Its function is as follows. Signaling peptide involved in the regulation of nodulation. Moves from root to shoot to function with the receptor kinase SUNN, in a signaling pathway that plays roles during cellular differentiation, both at the onset of nodulation, and later during nodule meristem development and subsequent homeostasis. Interacts with SUNN signaling to control nodule numbers. SUNN is involved in the autoregulation of nodulation (AON), a long distance systemic signaling from root to shoot and back again, which allows legumes to limit the number of root nodules formed based on available nitrogen and previous rhizobial colonization. The sequence is that of CLAVATA3/ESR (CLE)-related protein 13 from Medicago truncatula (Barrel medic).